The primary structure comprises 2150 residues: Hybrid signal transduction histidine kinase A (2150 aa).

Over residues 1–10 (MELKTFKDLN) the composition is skewed to basic and acidic residues. Disordered stretches follow at residues 1 to 41 (MELK…QQQQ), 68 to 149 (HIPQ…YYYS), 184 to 267 (NSSS…HQRR), 286 to 323 (KNKPLSSSTPSTVNTCGAVNNNSNNNNNNNNNSTGSLG), 339 to 359 (TEESTGGNNSPRSNCGSNCGS), 415 to 505 (NNNN…NSPR), 520 to 546 (SLTSSNNNNQSNNNTNPSINNNNGRNG), and 560 to 733 (KPVV…NGAT). A compositionally biased stretch (polar residues) spans 19 to 32 (PVINTGDQPNPLRT). A compositionally biased stretch (low complexity) spans 68 to 81 (HIPQQLYQKQQQQQ). Polar residues predominate over residues 82–104 (HSHSYGNHSFIHNVSPTSPSYDI). Composition is skewed to low complexity over residues 105–145 (NNNN…YNNN) and 184–244 (NSSS…NNNI). The segment covering 289–304 (PLSSSTPSTVNTCGAV) has biased composition (polar residues). 3 stretches are compositionally biased toward low complexity: residues 305–318 (NNNSNNNNNNNNNS), 344–359 (GGNNSPRSNCGSNCGS), and 415–447 (NNNNNNINPNNNPNNSNNSNNNVSPRNNNHNIS). Over residues 448-468 (PRGSNISPRSNNGGSTTISPR) the composition is skewed to polar residues. Composition is skewed to low complexity over residues 469 to 485 (NISNNNNIINNINNNNI), 520 to 545 (SLTSSNNNNQSNNNTNPSINNNNGRN), and 565 to 600 (NNGNNNNNNNTNNSTTSNNNITTNNNNNNNNNINNN). Residues 614 to 628 (SKTNSLQDFETSSMN) are compositionally biased toward polar residues. Residues 657 to 727 (NSNNTNSNNS…NNNNNNNNNN (71 aa)) are compositionally biased toward low complexity. A helical membrane pass occupies residues 772–792 (AIILGLFIVGSSISILATLVL). Residues 838-1082 (STSEDQFVPF…NVGGRNWMIA (245 aa)) form the CHASE domain. The helical transmembrane segment at 1098 to 1118 (PYAIGGVCMLLSALVSFWFAV) threads the bilayer. Residues 1139-1164 (NRKLAEKALAESQERLELAMEGSEDA) adopt a coiled-coil conformation. Disordered regions lie at residues 1209 to 1228 (LNFKGDSKNGGSNNGTFNLF) and 1233 to 1252 (VDSSSPQSITNVNTTNGGGG). The PAS domain maps to 1235 to 1317 (SSSPQSITNV…SEIKKTITRE (83 aa)). A PAC domain is found at 1321–1376 (MEIECRMRKKYGGYLYIIMRGKVVSNETSFKDNSLRMAGTLRDMTSRKDMQRLILE). Residues 1393–1620 (TVSHEVRTPL…KFKCIIPFLL (228 aa)) enclose the Histidine kinase domain. At His1396 the chain carries Phosphohistidine; by autocatalysis. Disordered regions lie at residues 1874–1893 (GGGSNTMNGSSGNLSNNNNF), 1933–1952 (HGNQQQQLYQQQQQQQNNSS), and 1962–2017 (QNNN…DTPV). Low complexity-rich tracts occupy residues 1878 to 1893 (NTMNGSSGNLSNNNNF), 1935 to 1952 (NQQQQLYQQQQQQQNNSS), and 1962 to 2002 (QNNN…TPTL). The Response regulatory domain occupies 2026-2146 (KALIVEDNEL…TLKDALAKWG (121 aa)). Asp2076 carries the 4-aspartylphosphate modification.

As to quaternary structure, interacts with SDF-2, an acbA peptide involved in sporulation.

The protein resides in the cell membrane. The enzyme catalyses ATP + protein L-histidine = ADP + protein N-phospho-L-histidine.. In terms of biological role, acts as a receptor histidine kinase for the cytokinin SDF-2 in a signal transduction pathway that regulates prestalk gene expression and controls terminal differentiation of prespore cells. Binding of SDF-2 to this protein inhibits phosphorelay and induces rapid sporulation. This protein undergoes an ATP-dependent autophosphorylation at a conserved histidine residue in the kinase core, and a phosphoryl group is then transferred to a conserved aspartate residue in the receiver domain. The protein is Hybrid signal transduction histidine kinase A (dhkA) of Dictyostelium discoideum (Social amoeba).